The chain runs to 526 residues: Glutamate--tRNA ligase, mitochondrial (526 aa).

Residues 1-38 (MLSYTSCAKLICSRYIVSKISFYSLKRCNSTAVVRTRF) constitute a mitochondrion transit peptide. 37-39 (RFA) serves as a coordination point for L-glutamate. Positions 42–50 (PTGFLHLGS) match the 'HIGH' region motif. Position 47 (His-47) interacts with ATP. L-glutamate contacts are provided by residues Glu-73, 222-226 (YHFAN), and Arg-240. Residues Glu-243 and 278 to 282 (KLSKR) contribute to the ATP site. Residues 278 to 282 (KLSKR) carry the 'KMSKS' region motif.

It belongs to the class-I aminoacyl-tRNA synthetase family. Glutamate--tRNA ligase type 1 subfamily.

It is found in the mitochondrion. It carries out the reaction tRNA(Glu) + L-glutamate + ATP = L-glutamyl-tRNA(Glu) + AMP + diphosphate. In terms of biological role, catalyzes the attachment of glutamate to tRNA(Glu) in a two-step reaction: glutamate is first activated by ATP to form Glu-AMP and then transferred to the acceptor end of tRNA(Glu). This is Glutamate--tRNA ligase, mitochondrial (mse1) from Schizosaccharomyces pombe (strain 972 / ATCC 24843) (Fission yeast).